The sequence spans 609 residues: ATP-dependent lipid A-core flippase (609 aa).

6 consecutive transmembrane segments (helical) span residues 47–67 (LLAAIGSIFFSAADASMIYLI), 88–108 (ILMLMGVGMVGLLALRSVGSF), 167–187 (AIITVVQDGTFVIGLIVVMFV), 190–210 (WQLSLFLIVVGPFLGLFISII), 279–299 (VIQIIASLVLAFSLFTIAIFG), and 305–325 (GSSWLTAGSFASFFAAAAAIL). The region spanning 47–340 (LLAAIGSIFF…LTKVNVVIQK (294 aa)) is the ABC transmembrane type-1 domain. The ABC transporter domain occupies 372–606 (VTIKDLSFAF…GGLYTRLYQS (235 aa)). 404–411 (GKSGSGKT) provides a ligand contact to ATP.

It belongs to the ABC transporter superfamily. Lipid exporter (TC 3.A.1.106) family. In terms of assembly, homodimer.

The protein resides in the cell inner membrane. It carries out the reaction ATP + H2O + lipid A-core oligosaccharideSide 1 = ADP + phosphate + lipid A-core oligosaccharideSide 2.. In terms of biological role, involved in lipopolysaccharide (LPS) biosynthesis. Translocates lipid A-core from the inner to the outer leaflet of the inner membrane. Transmembrane domains (TMD) form a pore in the inner membrane and the ATP-binding domain (NBD) is responsible for energy generation. This is ATP-dependent lipid A-core flippase from Francisella tularensis subsp. tularensis (strain FSC 198).